We begin with the raw amino-acid sequence, 628 residues long: MGYEAGQYDVIVIGAGHAGVEAALASARQGAKTLVLTINLDMVAFMPCNPSVGGPAKGIVVREIDALGGEMARNIDKTHIQMRMLNTGKGPAVRALRAQADKFQYQHEMKHTLEKTPNLTLLQGIAERLIIEDGECRGVITQTGAEYKAKTVVLTTGTYLRGRIILGDLSYSSGPNNQQPSIKLSEHLEELGFDLVRFKTGTPPRVSSDSIDYSKTEIQPGDPVPRAFSYETVEYITDQLPCWLTYTSPETHEIIDSNLHRSPMYSGMIKGTGPRYCPSIEDKVVRFNDKPRHQIFLEPEGRNTQEVYVQGLSTSLPEDVQQRMLATIPGLEKVQMMRAGYAIEYDAIVPTQLWPTLETKKIPNLYTAGQINGTSGYEEAAGQGIMAGINAGRKALGKEEVILSRSDAYIGVLIDDLVTKGTNEPYRLLTSRAEYRLLLRHDNADLRLTEIGHDIGLISDERYEAFEKKKAAIEAEKKRLWSVIIKPSPENQEYIRSLGGSELKDGVRGTDLMKRPEMNYETVTKLAPADSPVPQDVAEQVEIQVKYEGYIEKSLQQVEKLKKMENKKIPDRIDYDAIKGIATEARQKLKEVRPLSVAQASRISGVNPADISILLVYLEQGRIAKVAE.

Residue 14–19 (GAGHAG) coordinates FAD. 273–287 (GPRYCPSIEDKVVRF) provides a ligand contact to NAD(+).

It belongs to the MnmG family. As to quaternary structure, homodimer. Heterotetramer of two MnmE and two MnmG subunits. FAD is required as a cofactor.

The protein resides in the cytoplasm. Functionally, NAD-binding protein involved in the addition of a carboxymethylaminomethyl (cmnm) group at the wobble position (U34) of certain tRNAs, forming tRNA-cmnm(5)s(2)U34. The chain is tRNA uridine 5-carboxymethylaminomethyl modification enzyme MnmG from Bacillus velezensis (strain DSM 23117 / BGSC 10A6 / LMG 26770 / FZB42) (Bacillus amyloliquefaciens subsp. plantarum).